The chain runs to 686 residues: DNA topoisomerase 1 (686 aa).

The region spanning 1–141 (MILIIAEKPN…KRMKFSALTK (141 aa)) is the Toprim domain. Mg(2+) contacts are provided by Glu-7 and Asp-107. The 419-residue stretch at 156–574 (NFGMANAGIA…EAKERLTKIL (419 aa)) folds into the Topo IA-type catalytic domain. The tract at residues 196–201 (STGRVQ) is interaction with DNA. Tyr-317 serves as the catalytic O-(5'-phospho-DNA)-tyrosine intermediate. The C4-type 1 zinc finger occupies 606–634 (CPKCGGDLIVKYNKKTGKRFVGCSNWPKC). The C4-type 2; atypical zinc finger occupies 653–678 (CCNGAPVVIIREEDGREFEICLDINC).

The protein belongs to the type IA topoisomerase family. In terms of assembly, monomer. Mg(2+) is required as a cofactor.

The catalysed reaction is ATP-independent breakage of single-stranded DNA, followed by passage and rejoining.. Releases the supercoiling and torsional tension of DNA, which is introduced during the DNA replication and transcription, by transiently cleaving and rejoining one strand of the DNA duplex. Introduces a single-strand break via transesterification at a target site in duplex DNA. The scissile phosphodiester is attacked by the catalytic tyrosine of the enzyme, resulting in the formation of a DNA-(5'-phosphotyrosyl)-enzyme intermediate and the expulsion of a 3'-OH DNA strand. The free DNA strand then undergoes passage around the unbroken strand, thus removing DNA supercoils. Finally, in the religation step, the DNA 3'-OH attacks the covalent intermediate to expel the active-site tyrosine and restore the DNA phosphodiester backbone. The polypeptide is DNA topoisomerase 1 (Pyrococcus horikoshii (strain ATCC 700860 / DSM 12428 / JCM 9974 / NBRC 100139 / OT-3)).